The following is a 63-amino-acid chain: Odorranain-B1 (63 aa).

The N-terminal stretch at 1–22 (MFTTKKPLLLLFFLGIISLSVC) is a signal peptide. The propeptide occupies 23 to 41 (EQERDADEEDGGEVTEEEV).

This sequence belongs to the frog skin active peptide (FSAP) family. Brevinin subfamily. In terms of tissue distribution, expressed by the skin glands.

The protein resides in the secreted. The sequence is that of Odorranain-B1 from Odorrana hainanensis (Odor frog).